The primary structure comprises 318 residues: Ribosomal RNA small subunit methyltransferase H (318 aa).

Residues 37–39 (GGH), D57, F83, D104, and Q111 each bind S-adenosyl-L-methionine.

Belongs to the methyltransferase superfamily. RsmH family.

It localises to the cytoplasm. It catalyses the reaction cytidine(1402) in 16S rRNA + S-adenosyl-L-methionine = N(4)-methylcytidine(1402) in 16S rRNA + S-adenosyl-L-homocysteine + H(+). In terms of biological role, specifically methylates the N4 position of cytidine in position 1402 (C1402) of 16S rRNA. In Neisseria gonorrhoeae (strain ATCC 700825 / FA 1090), this protein is Ribosomal RNA small subunit methyltransferase H.